A 128-amino-acid chain; its full sequence is Transcription antitermination protein NusB (128 aa).

Belongs to the NusB family.

In terms of biological role, involved in transcription antitermination. Required for transcription of ribosomal RNA (rRNA) genes. Binds specifically to the boxA antiterminator sequence of the ribosomal RNA (rrn) operons. This chain is Transcription antitermination protein NusB, found in Staphylococcus haemolyticus (strain JCSC1435).